The primary structure comprises 191 residues: Protein YceI (191 aa).

A signal peptide spans 1–22 (MKKNLLGFTLASLLFTTGSAVA).

This sequence belongs to the UPF0312 family. Type 1 subfamily.

It is found in the periplasm. The polypeptide is Protein YceI (Salmonella newport (strain SL254)).